The following is a 146-amino-acid chain: UPF0735 ACT domain-containing protein Teth514_2312 (146 aa).

The 76-residue stretch at 71 to 146 (TLSMVLDHMP…GVRKIEILGE (76 aa)) folds into the ACT domain.

It belongs to the UPF0735 family.

This is UPF0735 ACT domain-containing protein Teth514_2312 from Thermoanaerobacter sp. (strain X514).